The chain runs to 145 residues: uncharacterized protein (145 aa).

Transmembrane regions (helical) follow at residues 3 to 23, 83 to 103, and 105 to 125; these read VGII…GIGG, YVID…YLVP, and LSLL…MLWI.

The protein localises to the cell membrane. This is an uncharacterized protein from Methanocaldococcus jannaschii (strain ATCC 43067 / DSM 2661 / JAL-1 / JCM 10045 / NBRC 100440) (Methanococcus jannaschii).